A 123-amino-acid polypeptide reads, in one-letter code: uncharacterized protein (123 aa).

Disordered stretches follow at residues 1–21 and 82–123; these read MGAPGGKINRPRTELKKKLFK and EKTA…EDES.

This is an uncharacterized protein from Homo sapiens (Human).